The primary structure comprises 209 residues: Imidazole glycerol phosphate synthase subunit HisH (209 aa).

The region spanning 1–205 (MIAIIDYGMG…KGVVKQWKSS (205 aa)) is the Glutamine amidotransferase type-1 domain. Catalysis depends on Cys-79, which acts as the Nucleophile. Active-site residues include His-180 and Glu-182.

As to quaternary structure, heterodimer of HisH and HisF.

The protein localises to the cytoplasm. The catalysed reaction is 5-[(5-phospho-1-deoxy-D-ribulos-1-ylimino)methylamino]-1-(5-phospho-beta-D-ribosyl)imidazole-4-carboxamide + L-glutamine = D-erythro-1-(imidazol-4-yl)glycerol 3-phosphate + 5-amino-1-(5-phospho-beta-D-ribosyl)imidazole-4-carboxamide + L-glutamate + H(+). It catalyses the reaction L-glutamine + H2O = L-glutamate + NH4(+). It participates in amino-acid biosynthesis; L-histidine biosynthesis; L-histidine from 5-phospho-alpha-D-ribose 1-diphosphate: step 5/9. Functionally, IGPS catalyzes the conversion of PRFAR and glutamine to IGP, AICAR and glutamate. The HisH subunit catalyzes the hydrolysis of glutamine to glutamate and ammonia as part of the synthesis of IGP and AICAR. The resulting ammonia molecule is channeled to the active site of HisF. This is Imidazole glycerol phosphate synthase subunit HisH from Bacillus cytotoxicus (strain DSM 22905 / CIP 110041 / 391-98 / NVH 391-98).